An 83-amino-acid chain; its full sequence is Probable insulin-like peptide alpha-type 2 (83 aa).

The first 21 residues, 1-21 (MHTTTILICFFIFLVQVSTMD), serve as a signal peptide directing secretion. 3 disulfides stabilise this stretch: cysteine 32-cysteine 66, cysteine 44-cysteine 79, and cysteine 54-cysteine 80.

This sequence belongs to the insulin family.

The protein resides in the secreted. The chain is Probable insulin-like peptide alpha-type 2 (ins-22) from Caenorhabditis elegans.